Consider the following 245-residue polypeptide: Orotidine 5'-phosphate decarboxylase (245 aa).

Substrate is bound by residues D22, K44, D71 to T80, T131, R192, Q201, G221, and R222. The active-site Proton donor is the K73.

The protein belongs to the OMP decarboxylase family. Type 1 subfamily. As to quaternary structure, homodimer.

It catalyses the reaction orotidine 5'-phosphate + H(+) = UMP + CO2. It participates in pyrimidine metabolism; UMP biosynthesis via de novo pathway; UMP from orotate: step 2/2. Catalyzes the decarboxylation of orotidine 5'-monophosphate (OMP) to uridine 5'-monophosphate (UMP). The sequence is that of Orotidine 5'-phosphate decarboxylase from Shigella flexneri.